Here is a 1029-residue protein sequence, read N- to C-terminus: MAQPQRPYDALYDPNFTVAGPRDHYRQQTMAGGFNIERAPVYNNFFSELPHHPPSTLRLKNADRVPAFVDRNYRPAANDPNDTRQRSDALAVSGPNRPKYFRRPMLAAAEIHIKQAPPSQLPPLPSHQDLNATAPAAMGGAGGLGEPRSKTIGTQSDYRENEAQTAPWEPGYVLPAPGALTAKQAALMRRYHTDVPEVLQLKDLAFPDGLPAGLQEVTRIDKMRAKRAFEASLPPIDDVARLPLRQRMIEEWEAKEWEEREQEILSIQDKRLELLDNALQVREEELDDENRLRVEARKEAMLAGRAGKFADVQATRIKTMRQLIENRKYVEKHRKLHKPTIVERYANYGSGTYAPLQREGRFPESKPLGKEIETEGYAPVTLKGVVDLESFLPSRLLNPRVAAPQKPARLDYHQRKEAAVQRDLKAINDLLDTAKGTAGRGFGDCWPAPLQDDGGAGMGNGTLGRATSTVGKGTLGAGGSAGGAAPGGASMALLGGPSTAAASAMGPLASGVSGSPSRRVVRAIERPPTPELPQPPAVTAPQHAAVVLLQRLLRGRAAQNIMYEGRVRRQELIDELRLEEVVSADGTKIDGQPIRRPEHRDTATLRIDALVGSAVAEVAAILAETDPERRETLLAGLDVSRAHATAAAVAAAAADINASARAEAEEAAATAMAEAAAAAAAAAAAAAAAEDGGAEGAAESAAEAAAAAEAAASAAEEAYAGAVAAAAAPARAAALNLEALGISPEEAEEAAVRIQAAFKGHKARKEVAAMRARGEMLRNIMANGDEAKVVTCQAAIRGHLARKRVRQLRASQAGNEGFAGAPSASPEPAAPLPALAENQDQQEPQPQPQPSSSSGALDLADYDDHHGEASAAMLGGEPSLAVGGSREGEQQLEADAEAEAEAEAEAEAGAEAEASAQAGAEAEAEAGVEAEAEASAGAEASVGAGAEGDAEAETEAGAQAEPGPEAEAEAEAGAEAEAENGAEAEARLGGEEEGFREGEGQGGAAAGEAGPGGELAEGEGEAGEGEAAE.

Disordered stretches follow at residues 72 to 97 (NYRPAANDPNDTRQRSDALAVSGPNR) and 117 to 170 (PPSQ…PWEP). The stretch at 272 to 299 (LELLDNALQVREEELDDENRLRVEARKE) forms a coiled coil. Positions 837-854 (ENQDQQEPQPQPQPSSSS) are enriched in low complexity. Disordered regions lie at residues 837–861 (ENQDQQEPQPQPQPSSSSGALDLAD) and 876–1029 (GEPS…EAAE). Residues 890-910 (QQLEADAEAEAEAEAEAEAGA) are compositionally biased toward acidic residues. The span at 911–921 (EAEASAQAGAE) shows a compositional bias: low complexity. A compositionally biased stretch (acidic residues) spans 922–932 (AEAEAGVEAEA). The span at 933-944 (EASAGAEASVGA) shows a compositional bias: low complexity. Residues 964-982 (PEAEAEAEAGAEAEAENGA) show a composition bias toward acidic residues. Residues 984 to 999 (AEARLGGEEEGFREGE) are compositionally biased toward basic and acidic residues. The segment covering 1000–1015 (GQGGAAAGEAGPGGEL) has biased composition (gly residues). Residues 1016–1029 (AEGEGEAGEGEAAE) are compositionally biased toward acidic residues.

It belongs to the CFAP91 family. Identified in a spoke-associated complex containing CFAP61, CFAP91 and CFAP251; the complex is associated with the radial spokes of the axoneme. The complex associates with Calmodulin; the association is calcium sensitive. Interacts with RSP3.

The protein resides in the cytoplasm. Its subcellular location is the cytoskeleton. The protein localises to the flagellum axoneme. Functionally, as component of a spoke-associated complex, regulates flagellar dynein activity by mediating regulatory signals between the radial spokes and dynein arms. In Chlamydomonas reinhardtii (Chlamydomonas smithii), this protein is Cilia- and flagella-associated protein 91.